The following is a 385-amino-acid chain: Acetylornithine deacetylase (385 aa).

His-80 contacts Zn(2+). Asp-82 is a catalytic residue. Asp-112 contributes to the Zn(2+) binding site. The active-site Proton acceptor is Glu-144. Residues Glu-145, Glu-169, and His-355 each contribute to the Zn(2+) site.

The protein belongs to the peptidase M20A family. ArgE subfamily. In terms of assembly, homodimer. Zn(2+) serves as cofactor. It depends on Co(2+) as a cofactor. Requires glutathione as cofactor.

The protein resides in the cytoplasm. The enzyme catalyses N(2)-acetyl-L-ornithine + H2O = L-ornithine + acetate. It functions in the pathway amino-acid biosynthesis; L-arginine biosynthesis; L-ornithine from N(2)-acetyl-L-ornithine (linear): step 1/1. Catalyzes the hydrolysis of the amide bond of N(2)-acetylated L-amino acids. Cleaves the acetyl group from N-acetyl-L-ornithine to form L-ornithine, an intermediate in L-arginine biosynthesis pathway, and a branchpoint in the synthesis of polyamines. The sequence is that of Acetylornithine deacetylase from Photorhabdus laumondii subsp. laumondii (strain DSM 15139 / CIP 105565 / TT01) (Photorhabdus luminescens subsp. laumondii).